Consider the following 1545-residue polypeptide: ATP-binding cassette sub-family C member 9 (1545 aa).

The Extracellular segment spans residues Met-1–Asn-30. Asn-9 carries N-linked (GlcNAc...) asparagine glycosylation. Residues Leu-31–Ser-51 traverse the membrane as a helical segment. The Cytoplasmic segment spans residues Gln-52 to Arg-72. Residues Trp-73 to Ser-93 traverse the membrane as a helical segment. Topologically, residues Asp-94–His-101 are extracellular. The helical transmembrane segment at Leu-102–Tyr-122 threads the bilayer. Residues His-123–Lys-132 lie on the Cytoplasmic side of the membrane. The helical transmembrane segment at Leu-133–Val-153 threads the bilayer. The Extracellular segment spans residues Lys-154–Phe-167. A helical transmembrane segment spans residues Cys-168–Ile-188. Over Arg-189–Ser-301 the chain is Cytoplasmic. The 298-residue stretch at Ile-297–Lys-594 folds into the ABC transmembrane type-1 1 domain. Residues Thr-302 to Val-322 form a helical membrane-spanning segment. Residues Gln-323–Asn-347 are Extracellular-facing. Asn-330 and Asn-331 each carry an N-linked (GlcNAc...) asparagine glycan. A helical transmembrane segment spans residues Ala-348–Ala-368. Residues Ser-369 to Gln-420 are Cytoplasmic-facing. A helical membrane pass occupies residues Leu-421–Gly-441. Residues Val-442–Ser-452 are Extracellular-facing. A helical transmembrane segment spans residues Ala-453–Lys-473. Over Leu-474–Thr-528 the chain is Cytoplasmic. Residues Phe-529 to Leu-549 traverse the membrane as a helical segment. Residues Ala-550–Ala-568 are Extracellular-facing. The helical transmembrane segment at Phe-569 to Val-589 threads the bilayer. Topologically, residues Arg-590 to Gly-986 are cytoplasmic. The region spanning Ile-668–Thr-908 is the ABC transporter 1 domain. ATP is bound at residue Gly-701 to Ser-708. Positions Arg-940 to Met-963 are disordered. Residues Glu-947–Asn-962 are compositionally biased toward acidic residues. A helical transmembrane segment spans residues Phe-987–Ile-1007. The ABC transmembrane type-1 2 domain occupies Leu-990 to Val-1270. Over Asp-1008–Phe-1030 the chain is Extracellular. Residues Tyr-1031–Leu-1051 traverse the membrane as a helical segment. The Cytoplasmic segment spans residues Thr-1052 to Met-1123. The helical transmembrane segment at Ile-1124–Phe-1144 threads the bilayer. Over Ile-1145–Ser-1241 the chain is Extracellular. A helical transmembrane segment spans residues Gly-1242–Val-1262. Over Arg-1263 to Lys-1545 the chain is Cytoplasmic. Residues Ile-1308–Met-1542 form the ABC transporter 2 domain. Gly-1342–Ser-1349 is an ATP binding site.

Belongs to the ABC transporter superfamily. ABCC family. Conjugate transporter (TC 3.A.1.208) subfamily. In terms of assembly, interacts with KCNJ11. Interacts with KCNJ8. Expressed at high levels in heart, skeletal muscle and ovary. Moderate levels are found in brain, tongue and pancreatic islets. Low levels are found in lung, testis and adrenal gland. Expressed at very low levels in stomach, colon, thyroid and pituitary.

It is found in the membrane. Functionally, subunit of ATP-sensitive potassium channels (KATP). Can form cardiac and smooth muscle-type KATP channels with KCNJ11. KCNJ11 forms the channel pore while ABCC9 is required for activation and regulation. Can form a sulfonylurea-sensitive but ATP-insensitive potassium channel with KCNJ8. In Rattus norvegicus (Rat), this protein is ATP-binding cassette sub-family C member 9 (Abcc9).